A 488-amino-acid polypeptide reads, in one-letter code: Acetyl-coenzyme A carboxylase carboxyl transferase subunit beta, chloroplastic (488 aa).

Positions leucine 224 to lysine 488 constitute a CoA carboxyltransferase N-terminal domain. Residues cysteine 228, cysteine 231, cysteine 244, and cysteine 247 each contribute to the Zn(2+) site. A C4-type zinc finger spans residues cysteine 228–cysteine 247.

The protein belongs to the AccD/PCCB family. In terms of assembly, acetyl-CoA carboxylase is a heterohexamer composed of biotin carboxyl carrier protein, biotin carboxylase and 2 subunits each of ACCase subunit alpha and ACCase plastid-coded subunit beta (accD). The cofactor is Zn(2+).

The protein localises to the plastid. It localises to the chloroplast stroma. It carries out the reaction N(6)-carboxybiotinyl-L-lysyl-[protein] + acetyl-CoA = N(6)-biotinyl-L-lysyl-[protein] + malonyl-CoA. Its pathway is lipid metabolism; malonyl-CoA biosynthesis; malonyl-CoA from acetyl-CoA: step 1/1. Its function is as follows. Component of the acetyl coenzyme A carboxylase (ACC) complex. Biotin carboxylase (BC) catalyzes the carboxylation of biotin on its carrier protein (BCCP) and then the CO(2) group is transferred by the transcarboxylase to acetyl-CoA to form malonyl-CoA. This Arabis hirsuta (Hairy rock-cress) protein is Acetyl-coenzyme A carboxylase carboxyl transferase subunit beta, chloroplastic.